The following is an 850-amino-acid chain: Vacuolar membrane protease (850 aa).

Residues 1-20 lie on the Cytoplasmic side of the membrane; the sequence is MASSRAQWFNPIAFTPWPVT. A helical transmembrane segment spans residues 21 to 41; the sequence is CITTIVYLALLIPILVINLVV. The Vacuolar portion of the chain corresponds to 42-282; sequence PSAPETNPKG…DGKSKDQNKV (241 aa). N-linked (GlcNAc...) asparagine glycosylation is found at Asn-53, Asn-116, and Asn-119. Residues His-175 and Asp-187 each contribute to the Zn(2+) site. Residue Glu-221 is the Proton acceptor of the active site. Residue Glu-222 participates in Zn(2+) binding. The chain crosses the membrane as a helical span at residues 283–303; that stretch reads NSGTGTLGVWFDMFGTAFAVF. The Cytoplasmic segment spans residues 304 to 308; it reads RLHTL. The helical transmembrane segment at 309 to 329 threads the bilayer; that stretch reads FAISVALLVIAPLVIFVTSVI. Residues 330–363 lie on the Vacuolar side of the membrane; sequence LSKTDRMYLFSMSKSLEGTGDQVSLRGLRGFSRT. Residues 364–384 form a helical membrane-spanning segment; it reads PIILVIATTIPICLAYLLEKV. Residues 385-393 are Cytoplasmic-facing; it reads NPYIVHSSQ. The helical transmembrane segment at 394 to 414 threads the bilayer; that stretch reads FSVWSMMFSAWIFLAWFLACA. Over 415-425 the chain is Vacuolar; sequence ADFFRPSALHR. Residues 426 to 446 form a helical membrane-spanning segment; sequence AYSYTWIFIATWIMLVINTVY. Over 447 to 529 the chain is Cytoplasmic; that stretch reads ANQKGIAAGP…TLPRWTWVLQ (83 aa). A helical membrane pass occupies residues 530-550; sequence LLLLAPIVLILVGQLALFLTA. Topologically, residues 551 to 563 are vacuolar; sequence SMCQVGSDGVSTF. Residues 564–584 traverse the membrane as a helical segment; the sequence is VVYLACSVFTTLLCIPLFPLI. Residues 585–590 are Cytoplasmic-facing; it reads HRFTYH. Residues 591–611 form a helical membrane-spanning segment; that stretch reads IPTFLFLVFIGTLIYNLVAFP. Over 612 to 850 the chain is Vacuolar; the sequence is FSPANRLKTF…VEASHSFTIQ (239 aa). N-linked (GlcNAc...) asparagine glycans are attached at residues Asn-630, Asn-658, and Asn-702.

This sequence belongs to the peptidase M28 family. The cofactor is Zn(2+).

It is found in the vacuole membrane. In terms of biological role, may be involved in vacuolar sorting and osmoregulation. In Ajellomyces capsulatus (strain NAm1 / WU24) (Darling's disease fungus), this protein is Vacuolar membrane protease.